A 297-amino-acid polypeptide reads, in one-letter code: Ribonuclease H2 subunit A (297 aa).

The RNase H type-2 domain maps to 21–248 (PCVLGIDEAG…ASTIVEKRCV (228 aa)). Positions 27, 28, and 138 each coordinate a divalent metal cation.

It belongs to the RNase HII family. Eukaryotic subfamily. Mn(2+) is required as a cofactor. Requires Mg(2+) as cofactor.

It carries out the reaction Endonucleolytic cleavage to 5'-phosphomonoester.. In terms of biological role, catalytic subunit of RNase HII, an endonuclease that specifically degrades the RNA of RNA:DNA hybrids. Participates in DNA replication, possibly by mediating the removal of lagging-strand Okazaki fragment RNA primers during DNA replication. Mediates the excision of single ribonucleotides from DNA:RNA duplexes. The sequence is that of Ribonuclease H2 subunit A (rnh-2) from Caenorhabditis elegans.